We begin with the raw amino-acid sequence, 370 residues long: Mesoderm posterior protein 2 (370 aa).

Disordered regions lie at residues 51–89 (PSQPAGPARSTRTTQATAPRRTRPAPAGGQRQSASEREK), 231–265 (SLERAADSSPWAPPQACPGMQMSPEPRNKTGHWTQ), and 325–350 (TSEDQGSSPALQLPVASPTPSSGLQL). Over residues 57 to 77 (PARSTRTTQATAPRRTRPAPA) the composition is skewed to low complexity. Residues 79 to 133 (GQRQSASEREKLRMRTLARALQELRRFLPPSVAPAGQSLTKIETLRLAIRYIGHL) enclose the bHLH domain. The segment covering 325 to 334 (TSEDQGSSPA) has biased composition (polar residues). The interval 326-330 (SEDQG) is may contain a degradation domain.

In terms of processing, degraded by the proteasome. Phosphorylated.

It is found in the nucleus. Functionally, transcription factor with important role in somitogenesis. Defines the rostrocaudal patterning of the somite by participating in distinct Notch pathways. Also regulates the FGF signaling pathway. Specifies the rostral half of the somites. Generates rostro-caudal polarity of somites by down-regulating in the presumptive rostral domain DLL1, a Notch ligand. Participates in the segment border formation by activating in the anterior presomitic mesoderm LFNG, a negative regulator of DLL1-Notch signaling. Acts as a strong suppressor of Notch activity. Together with MESP1 is involved in the epithelialization of somitic mesoderm and in the development of cardiac mesoderm. May play a role with Tcf15 in the differentiation of myotomal and sclerotomal cells by regulating Pax family genes. Also controls the expression of the protocadherin PCDH8/PAPC, EPHA4, RIPPLY2, NOTCH2, FGFR1, and CER1. Binds to the E-boxes within the EPH4A and RIPPLY2 enhancers. The protein is Mesoderm posterior protein 2 (Mesp2) of Mus musculus (Mouse).